Consider the following 154-residue polypeptide: Ribosomal RNA large subunit methyltransferase H (154 aa).

S-adenosyl-L-methionine is bound by residues L70, G102, and L121–L126.

It belongs to the RNA methyltransferase RlmH family. As to quaternary structure, homodimer.

The protein resides in the cytoplasm. It carries out the reaction pseudouridine(1915) in 23S rRNA + S-adenosyl-L-methionine = N(3)-methylpseudouridine(1915) in 23S rRNA + S-adenosyl-L-homocysteine + H(+). Specifically methylates the pseudouridine at position 1915 (m3Psi1915) in 23S rRNA. The chain is Ribosomal RNA large subunit methyltransferase H from Geobacter sp. (strain M21).